We begin with the raw amino-acid sequence, 239 residues long: LexA repressor (239 aa).

The segment at residues 26–46 (FDEMKDALDLASKSGIHRLIT) is a DNA-binding region (H-T-H motif). A disordered region spans residues 84 to 107 (SPSVIEGSLGKPQPVATPAPAKSV). Residues serine 159 and lysine 197 each act as for autocatalytic cleavage activity in the active site.

It belongs to the peptidase S24 family. As to quaternary structure, homodimer.

The enzyme catalyses Hydrolysis of Ala-|-Gly bond in repressor LexA.. Functionally, represses a number of genes involved in the response to DNA damage (SOS response), including recA and lexA. In the presence of single-stranded DNA, RecA interacts with LexA causing an autocatalytic cleavage which disrupts the DNA-binding part of LexA, leading to derepression of the SOS regulon and eventually DNA repair. In Rhizobium johnstonii (strain DSM 114642 / LMG 32736 / 3841) (Rhizobium leguminosarum bv. viciae), this protein is LexA repressor.